The chain runs to 251 residues: Probable ATP-dependent transporter ycf16 (251 aa).

The ABC transporter domain maps to 6-250 (LEIKDLYASV…EKHGYDWITQ (245 aa)). 38 to 45 (GPNGSGKS) is an ATP binding site.

Belongs to the ABC transporter superfamily. Ycf16 family.

The protein localises to the plastid. Its subcellular location is the chloroplast. This is Probable ATP-dependent transporter ycf16 (ycf16) from Pyropia yezoensis (Susabi-nori).